The chain runs to 262 residues: Regulatory protein RecX (262 aa).

The protein belongs to the RecX family.

It localises to the cytoplasm. In terms of biological role, modulates RecA activity. In Photobacterium profundum (strain SS9), this protein is Regulatory protein RecX.